Consider the following 352-residue polypeptide: Ketol-acid reductoisomerase (NAD(+)) (352 aa).

The KARI N-terminal Rossmann domain occupies Glu11 to Thr199. Residues Tyr38 to Gln41 and Asp100 to Gln103 contribute to the NAD(+) site. The active site involves His124. Residue Gly153 participates in NAD(+) binding. In terms of domain architecture, KARI C-terminal knotted spans Thr200 to Asn347. Mg(2+)-binding residues include Asp208, Glu212, Glu244, and Glu248. Ser270 serves as a coordination point for substrate.

It belongs to the ketol-acid reductoisomerase family. Requires Mg(2+) as cofactor.

The catalysed reaction is (2R)-2,3-dihydroxy-3-methylbutanoate + NAD(+) = (2S)-2-acetolactate + NADH + H(+). It participates in amino-acid biosynthesis; L-isoleucine biosynthesis; L-isoleucine from 2-oxobutanoate: step 2/4. The protein operates within amino-acid biosynthesis; L-valine biosynthesis; L-valine from pyruvate: step 2/4. In terms of biological role, involved in the biosynthesis of branched-chain amino acids (BCAA). Catalyzes an alkyl-migration followed by a ketol-acid reduction of (S)-2-acetolactate (S2AL) to yield (R)-2,3-dihydroxy-isovalerate. In the isomerase reaction, S2AL is rearranged via a Mg-dependent methyl migration to produce 3-hydroxy-3-methyl-2-ketobutyrate (HMKB). In the reductase reaction, this 2-ketoacid undergoes a metal-dependent reduction by NADH to yield (R)-2,3-dihydroxy-isovalerate. In Desulfosudis oleivorans (strain DSM 6200 / JCM 39069 / Hxd3) (Desulfococcus oleovorans), this protein is Ketol-acid reductoisomerase (NAD(+)).